A 337-amino-acid chain; its full sequence is MRVLGIETSCDETGIAIYDDKKGLLANQLYSQVKLHADYGGVVPELASRDHVRKTVPLIQAALKEAGLTASDIDAVAYTAGPGLVGALLVGATVGRSLAFAWNVPAIPVHHMEGHLLAPMLEDNPPDFPFVALLVSGGHTQLISVTGIGQYELLGESIDDAAGEAFDKTAKLLGLDYPGGPMLSKMASQGTAGRFVFPRPMTDRPGLDFSFSGLKTFAANTIRSNGDDEQTRADIARAFEDAVVDTLMIKCKRALESTGFKRLVMAGGVSANRTLRAKLAEMMQKRRGEVFYARPEFCTDNGAMIAYAGMVRFKAGVTADLGVTVRPRWPLAELPAA.

Residues histidine 111 and histidine 115 each coordinate Fe cation. Substrate-binding positions include 134–138, aspartate 167, glycine 180, and asparagine 272; that span reads LVSGG. Aspartate 300 serves as a coordination point for Fe cation.

It belongs to the KAE1 / TsaD family. Fe(2+) is required as a cofactor.

It is found in the cytoplasm. The enzyme catalyses L-threonylcarbamoyladenylate + adenosine(37) in tRNA = N(6)-L-threonylcarbamoyladenosine(37) in tRNA + AMP + H(+). Functionally, required for the formation of a threonylcarbamoyl group on adenosine at position 37 (t(6)A37) in tRNAs that read codons beginning with adenine. Is involved in the transfer of the threonylcarbamoyl moiety of threonylcarbamoyl-AMP (TC-AMP) to the N6 group of A37, together with TsaE and TsaB. TsaD likely plays a direct catalytic role in this reaction. This chain is tRNA N6-adenosine threonylcarbamoyltransferase, found in Salmonella choleraesuis (strain SC-B67).